Here is a 327-residue protein sequence, read N- to C-terminus: Cytochrome f (327 aa).

A signal peptide spans 1–24 (MKRIYLALCALLLLLGTGSRPAAA). Heme-binding residues include Tyr25, Cys45, Cys48, and His49. Residues 293-313 (VKWLVAFLAAVAITQLLLVLK) traverse the membrane as a helical segment.

It belongs to the cytochrome f family. In terms of assembly, the 4 large subunits of the cytochrome b6-f complex are cytochrome b6, subunit IV (17 kDa polypeptide, PetD), cytochrome f and the Rieske protein, while the 4 small subunits are PetG, PetL, PetM and PetN. The complex functions as a dimer. Heme serves as cofactor.

It localises to the cellular thylakoid membrane. Functionally, component of the cytochrome b6-f complex, which mediates electron transfer between photosystem II (PSII) and photosystem I (PSI), cyclic electron flow around PSI, and state transitions. The polypeptide is Cytochrome f (Synechococcus sp. (strain JA-3-3Ab) (Cyanobacteria bacterium Yellowstone A-Prime)).